A 139-amino-acid chain; its full sequence is Histone H2A (139 aa).

A disordered region spans residues 1-27 (MSGKGKAGKSGGKAGSETKSMSRSSKA). The residue at position 2 (S2) is an N-acetylserine. N6-acetyllysine occurs at positions 9 and 13. A compositionally biased stretch (polar residues) spans 17-27 (ETKSMSRSSKA). Q110 carries the N5-methylglutamine modification. A disordered region spans residues 119 to 139 (PELLPSKSSKGKKDEGVSQEL). Over residues 129–139 (GKKDEGVSQEL) the composition is skewed to basic and acidic residues. A Phosphoserine modification is found at S136. Positions 136 to 137 (SQ) match the [ST]-Q motif motif.

It belongs to the histone H2A family. The nucleosome is a histone octamer containing two molecules each of H2A, H2B, H3 and H4 assembled in one H3-H4 heterotetramer and two H2A-H2B heterodimers. The octamer wraps approximately 147 bp of DNA. Post-translationally, phosphorylated to form H2AS128ph (gamma-H2A) in response to DNA double-strand breaks (DSBs) generated by exogenous genotoxic agents and by stalled replication forks. Phosphorylation is dependent on the DNA damage checkpoint kinases MEC1/ATR and TEL1/ATM, spreads on either side of a detected DSB site and may mark the surrounding chromatin for recruitment of proteins required for DNA damage signaling and repair. Gamma-H2A is removed from the DNA prior to the strand invasion-primer extension step of the repair process and subsequently dephosphorylated. Dephosphorylation is necessary for efficient recovery from the DNA damage checkpoint. Acetylated by ESA1 to form H2AK4ac and H2AK7ac.

It is found in the nucleus. The protein resides in the chromosome. Its function is as follows. Core component of nucleosome which plays a central role in DNA double strand break (DSB) repair. Nucleosomes wrap and compact DNA into chromatin, limiting DNA accessibility to the cellular machineries which require DNA as a template. Histones thereby play a central role in transcription regulation, DNA repair, DNA replication and chromosomal stability. DNA accessibility is regulated via a complex set of post-translational modifications of histones, also called histone code, and nucleosome remodeling. The chain is Histone H2A from Agaricus bisporus (White button mushroom).